A 77-amino-acid polypeptide reads, in one-letter code: Translation initiation factor IF-1, chloroplastic (77 aa).

Residues Met-1–Arg-71 form the S1-like domain.

It belongs to the IF-1 family. Component of the 30S ribosomal translation pre-initiation complex which assembles on the 30S ribosome in the order IF-2 and IF-3, IF-1 and N-formylmethionyl-tRNA(fMet); mRNA recruitment can occur at any time during PIC assembly.

It is found in the plastid. The protein localises to the chloroplast. In terms of biological role, one of the essential components for the initiation of protein synthesis. Stabilizes the binding of IF-2 and IF-3 on the 30S subunit to which N-formylmethionyl-tRNA(fMet) subsequently binds. Helps modulate mRNA selection, yielding the 30S pre-initiation complex (PIC). Upon addition of the 50S ribosomal subunit IF-1, IF-2 and IF-3 are released leaving the mature 70S translation initiation complex. This chain is Translation initiation factor IF-1, chloroplastic, found in Coffea arabica (Arabian coffee).